A 186-amino-acid polypeptide reads, in one-letter code: MFIKANADGYALALYDLHKEEKHVSSTYENILSFYELLSNDKEVFSFFNSSKIGLEEKHKIADELVQENKNLKTFANFLKLLISKNNSPLLLQALSIYIRLVESELNILRAKLISAFEIDNQTKIKIIEKLENKYNKKIKLTTFIDKSLIFGFKIVIGNDIIEQNAKADLEKISSLINNKNGDLNG.

Belongs to the ATPase delta chain family. As to quaternary structure, F-type ATPases have 2 components, F(1) - the catalytic core - and F(0) - the membrane proton channel. F(1) has five subunits: alpha(3), beta(3), gamma(1), delta(1), epsilon(1). F(0) has three main subunits: a(1), b(2) and c(10-14). The alpha and beta chains form an alternating ring which encloses part of the gamma chain. F(1) is attached to F(0) by a central stalk formed by the gamma and epsilon chains, while a peripheral stalk is formed by the delta and b chains.

The protein resides in the cell membrane. Its function is as follows. F(1)F(0) ATP synthase produces ATP from ADP in the presence of a proton or sodium gradient. F-type ATPases consist of two structural domains, F(1) containing the extramembraneous catalytic core and F(0) containing the membrane proton channel, linked together by a central stalk and a peripheral stalk. During catalysis, ATP synthesis in the catalytic domain of F(1) is coupled via a rotary mechanism of the central stalk subunits to proton translocation. Functionally, this protein is part of the stalk that links CF(0) to CF(1). It either transmits conformational changes from CF(0) to CF(1) or is implicated in proton conduction. The protein is ATP synthase subunit delta of Mycoplasmopsis agalactiae (strain NCTC 10123 / CIP 59.7 / PG2) (Mycoplasma agalactiae).